The sequence spans 131 residues: SPbeta prophage-derived uncharacterized protein YosD (131 aa).

Residues 102–131 (EHNNKKAKNNDTQNQRQIKTSWWQRLTKKD) are disordered. Polar residues predominate over residues 111 to 125 (NDTQNQRQIKTSWWQ).

This chain is SPbeta prophage-derived uncharacterized protein YosD (yosD), found in Bacillus subtilis (strain 168).